Consider the following 490-residue polypeptide: tRNA-guanine(15) transglycosylase (490 aa).

Asp-90 serves as the catalytic Nucleophile. Substrate-binding residues include Asp-125 and Ala-193. Positions 276, 278, and 281 each coordinate Zn(2+).

The protein belongs to the archaeosine tRNA-ribosyltransferase family. The cofactor is Zn(2+).

The enzyme catalyses guanosine(15) in tRNA + 7-cyano-7-deazaguanine = 7-cyano-7-carbaguanosine(15) in tRNA + guanine. It participates in tRNA modification; archaeosine-tRNA biosynthesis. Functionally, exchanges the guanine residue with 7-cyano-7-deazaguanine (preQ0) at position 15 in the dihydrouridine loop (D-loop) of archaeal tRNAs. The sequence is that of tRNA-guanine(15) transglycosylase from Methanosarcina barkeri (strain Fusaro / DSM 804).